The following is a 109-amino-acid chain: MNTLPATISQAAKPCLSPVAVWQMLLTRLLEQHYGLTLNDTPFSDETVIKEHIDAGITLADAVNFLVEKYELVRIDHRGFSWQQQSPYISVVDILRARRSTGLLKTNVK.

The protein belongs to the CbtA/YkfI/YpjF toxin family. Interacts with FtsZ but not MreB. Another group finds interaction with FtsZ and MreB.

Functionally, toxic component of a type IV toxin-antitoxin (TA) system. Acts as a dual toxin inhibitor that blocks cell division and cell elongation in genetically separable interactions with FtsZ and MreB. Overexpression results in inhibition of growth in liquid cultures. Overexpression leads to formation of lemon-shaped cells; inactivated by overexpression of cognate antitoxin YfjZ but not when the 2 genes are coexpressed from the same plasmid. Also neutralized by overexpression of non-cognate antitoxins YafW and CbeA. The chain is Toxin YpjF (ypjF) from Escherichia coli (strain K12).